Consider the following 368-residue polypeptide: Peptide chain release factor 2 (368 aa).

Gln-249 bears the N5-methylglutamine mark.

The protein belongs to the prokaryotic/mitochondrial release factor family. Methylated by PrmC. Methylation increases the termination efficiency of RF2.

Its subcellular location is the cytoplasm. Its function is as follows. Peptide chain release factor 2 directs the termination of translation in response to the peptide chain termination codons UGA and UAA. This Rhodococcus erythropolis (strain PR4 / NBRC 100887) protein is Peptide chain release factor 2.